The chain runs to 589 residues: Probable translation initiation factor IF-2 (589 aa).

One can recognise a tr-type G domain in the interval 4-225; the sequence is VRSPFVVVMG…AGVSQRFIPR (222 aa). The interval 13-20 is G1; sequence GHVDVGKT. Position 13–20 (13–20) interacts with GTP; that stretch reads GHVDVGKT. The tract at residues 38–42 is G2; sequence MITQH. The G3 stretch occupies residues 79-82; the sequence is DTPG. GTP-binding positions include 79–83 and 133–136; these read DTPGH and NKLD. The interval 133–136 is G4; that stretch reads NKLD. A G5 region spans residues 201–203; the sequence is SAV.

It belongs to the TRAFAC class translation factor GTPase superfamily. Classic translation factor GTPase family. IF-2 subfamily.

Its function is as follows. Function in general translation initiation by promoting the binding of the formylmethionine-tRNA to ribosomes. Seems to function along with eIF-2. The polypeptide is Probable translation initiation factor IF-2 (Pyrobaculum aerophilum (strain ATCC 51768 / DSM 7523 / JCM 9630 / CIP 104966 / NBRC 100827 / IM2)).